Consider the following 534-residue polypeptide: EH domain-containing protein 1 (534 aa).

M1 bears the N-acetylmethionine mark. Residues F55 to P286 enclose the Dynamin-type G domain. Positions G65 to T72 are G1 motif. G65–T72 lines the ATP pocket. Residues E91 to P92 are G2 motif. The segment at D153–G156 is G3 motif. The stretch at D198 to Q227 forms a coiled coil. The tract at residues N219–D222 is G4 motif. ATP is bound at residue K220. I243 is a region of interest (G5 motif). ATP is bound at residue W258. A phosphoserine mark is found at S355 and S456. Residues D444–R532 enclose the EH domain. Residues L476–K511 enclose the EF-hand domain. Ca(2+) contacts are provided by D489, D491, D493, and E500.

Belongs to the TRAFAC class dynamin-like GTPase superfamily. Dynamin/Fzo/YdjA family. EHD subfamily. As to quaternary structure, homooligomer, and heterooligomer with EHD2, EHD3 and EHD4, ATP-binding is required for heterooligomerization. Interacts (via EH domain) with MICALL1 (via NPF1 motif); the interaction is direct and recruits EHD1 to membranes. Interacts with RAB35; the interaction is indirect through MICALL1 and recruits EHD1 to membranes. Interacts (via EH domain) with PACSIN2 (via NPF motifs); regulates localization to tubular recycling endosome membranes. Interacts with PACSIN1. Interacts with RAB8A. Interacts with FER1L5 (via second C2 domain). Interacts with MYOF. Interacts with ZFYVE20. Interacts (via EH domain) with RAB11FIP2.

It is found in the recycling endosome membrane. Its subcellular location is the early endosome membrane. The protein resides in the cell membrane. The protein localises to the cell projection. It localises to the cilium membrane. Its function is as follows. ATP- and membrane-binding protein that controls membrane reorganization/tubulation upon ATP hydrolysis. In vitro causes vesiculation of endocytic membranes. Acts in early endocytic membrane fusion and membrane trafficking of recycling endosomes. Recruited to endosomal membranes upon nerve growth factor stimulation, indirectly regulates neurite outgrowth. Plays a role in myoblast fusion. Involved in the unidirectional retrograde dendritic transport of endocytosed BACE1 and in efficient sorting of BACE1 to axons implicating a function in neuronal APP processing. Plays a role in the formation of the ciliary vesicle (CV), an early step in cilium biogenesis. Proposed to be required for the fusion of distal appendage vesicles (DAVs) to form the CV by recruiting SNARE complex component SNAP29. Is required for recruitment of transition zone proteins CEP290, RPGRIP1L, TMEM67 and B9D2, and of IFT20 following DAV reorganization before Rab8-dependent ciliary membrane extension. Required for the loss of CCP110 form the mother centriole essential for the maturation of the basal body during ciliogenesis. The chain is EH domain-containing protein 1 from Rattus norvegicus (Rat).